A 439-amino-acid polypeptide reads, in one-letter code: MGKPIVAIVGRPNVGKSTLFNKLAGKRIAIVQDTPGVTRDRIYAEAEWLNYKFTMIDTGGIEPKSEDIIVSQMRRQAQIAIEMANVIIFLVDGKEGLAPADEEVAQMLRKSKKPVVLVVNKIDKLKDENNAYEFYNLGIGDPVTISSSQALGLGDMLDRVVEYFKDDESDGEDDERINIAFIGKPNVGKSSLINKLLGEERLIVSDIPGTTRDSIDSYVDTEFGEFTLIDTAGLRRKSKVKEEIERYSVIRTYASIERADVCILMIDATEGISEQDQKIIGYAHDINKAILVIVNKWDLVEKDDKTMDKFKKELKVNLSFMPYAKYLFISAKTGQRIVKVLQTAKECYDNYTKRVKTGVLNDVISQAIMMKEPPIVGTKRLKIYYVTQIGTKPPTFIFFVNDPACIHFSYQRYLENQLRENFDFQGTGIKLEFRERKEK.

EngA-type G domains follow at residues 4–168 and 177–352; these read PIVA…KDDE and INIA…DNYT. Residues 10–17, 57–61, 120–123, 183–190, 230–234, and 295–298 each bind GTP; these read GRPNVGKS, DTGGI, NKID, GKPNVGKS, DTAGL, and NKWD. Positions 353–437 constitute a KH-like domain; that stretch reads KRVKTGVLND…GIKLEFRERK (85 aa).

Belongs to the TRAFAC class TrmE-Era-EngA-EngB-Septin-like GTPase superfamily. EngA (Der) GTPase family. In terms of assembly, associates with the 50S ribosomal subunit.

GTPase that plays an essential role in the late steps of ribosome biogenesis. The polypeptide is GTPase Der (Clostridium botulinum (strain Langeland / NCTC 10281 / Type F)).